The sequence spans 67 residues: Large ribosomal subunit protein bL31 (67 aa).

This sequence belongs to the bacterial ribosomal protein bL31 family. Type A subfamily. In terms of assembly, part of the 50S ribosomal subunit.

Its function is as follows. Binds the 23S rRNA. This is Large ribosomal subunit protein bL31 from Wolinella succinogenes (strain ATCC 29543 / DSM 1740 / CCUG 13145 / JCM 31913 / LMG 7466 / NCTC 11488 / FDC 602W) (Vibrio succinogenes).